The chain runs to 387 residues: tRNA pseudouridine synthase B (387 aa).

Residue Asp-43 is the Nucleophile of the active site.

This sequence belongs to the pseudouridine synthase TruB family. Type 1 subfamily.

It catalyses the reaction uridine(55) in tRNA = pseudouridine(55) in tRNA. Its function is as follows. Responsible for synthesis of pseudouridine from uracil-55 in the psi GC loop of transfer RNAs. This chain is tRNA pseudouridine synthase B, found in Bifidobacterium longum subsp. infantis (strain ATCC 15697 / DSM 20088 / JCM 1222 / NCTC 11817 / S12).